The following is a 655-amino-acid chain: Peroxidase skpo-1 (655 aa).

A signal peptide spans Met-1 to Ser-19. The ShKT domain occupies Cys-22–Cys-56. Cystine bridges form between Cys-22–Cys-56, Cys-29–Cys-49, Cys-38–Cys-53, and Cys-133–Cys-150. The active-site Proton acceptor is the His-222. His-428 contacts heme b. Intrachain disulfides connect Cys-520/Cys-576 and Cys-617/Cys-642.

This sequence belongs to the peroxidase family. XPO subfamily. It depends on heme b as a cofactor. Exclusively expressed in hypodermis.

The catalysed reaction is 2 a phenolic donor + H2O2 = 2 a phenolic radical donor + 2 H2O. Involved in hypodermal immune response against some types of bacterial infection. Probably utilizes H(2)O(2) produced by the NADPH oxidase bli-3. May play a role in cuticule biosynthesis. The sequence is that of Peroxidase skpo-1 from Caenorhabditis elegans.